The sequence spans 267 residues: Exosome complex component Rrp42 (267 aa).

This sequence belongs to the RNase PH family. Rrp42 subfamily. Component of the archaeal exosome complex. Forms a hexameric ring-like arrangement composed of 3 Rrp41-Rrp42 heterodimers. The hexameric ring associates with a trimer of Rrp4 and/or Csl4 subunits.

It is found in the cytoplasm. In terms of biological role, non-catalytic component of the exosome, which is a complex involved in RNA degradation. Contributes to the structuring of the Rrp41 active site. The protein is Exosome complex component Rrp42 of Methanopyrus kandleri (strain AV19 / DSM 6324 / JCM 9639 / NBRC 100938).